Consider the following 252-residue polypeptide: TVP38/TMEM64 family membrane protein Mb1528c (252 aa).

Helical transmembrane passes span 32–52, 64–84, 88–108, 149–169, 177–197, and 209–229; these read IVGT…VPVP, LGAW…VPPF, AFTL…IAVV, WLAI…INYA, ILSF…AVVI, and LLIL…VYEI.

This sequence belongs to the TVP38/TMEM64 family.

It localises to the cell membrane. The chain is TVP38/TMEM64 family membrane protein Mb1528c from Mycobacterium bovis (strain ATCC BAA-935 / AF2122/97).